A 186-amino-acid polypeptide reads, in one-letter code: MADEQQTLDQQTPEQPTGAAEDLTARVQELEEQLAAAQDQALRMVADLQNVRRRAEQDVEKAHKFALEKFAGDLLAVVDTLERGLEMSDPNDEAIKPMREGMELTLKMFDDTLRRYQVEALNPEGEPFNPEQHQAMAMQESASAEPGSVLKVFQKGYLLNGRLLRPAMVVVSKAPAETPPSIDEQA.

Residues 1–15 (MADEQQTLDQQTPEQ) are compositionally biased toward polar residues. The disordered stretch occupies residues 1–20 (MADEQQTLDQQTPEQPTGAA).

This sequence belongs to the GrpE family. Homodimer.

It is found in the cytoplasm. Participates actively in the response to hyperosmotic and heat shock by preventing the aggregation of stress-denatured proteins, in association with DnaK and GrpE. It is the nucleotide exchange factor for DnaK and may function as a thermosensor. Unfolded proteins bind initially to DnaJ; upon interaction with the DnaJ-bound protein, DnaK hydrolyzes its bound ATP, resulting in the formation of a stable complex. GrpE releases ADP from DnaK; ATP binding to DnaK triggers the release of the substrate protein, thus completing the reaction cycle. Several rounds of ATP-dependent interactions between DnaJ, DnaK and GrpE are required for fully efficient folding. This chain is Protein GrpE, found in Pseudomonas aeruginosa (strain UCBPP-PA14).